The chain runs to 86 residues: Electron transfer flavoprotein regulatory factor 1 (86 aa).

This sequence belongs to the complex I LYR family. In terms of assembly, homotetramer. Interacts with NDUFAB1. Interacts with ETFA. Interacts with ETFB.

The protein localises to the mitochondrion. In terms of biological role, acts as a regulator of the electron transfer flavoprotein by promoting the removal of flavin from the ETF holoenzyme (composed of ETFA and ETFB). The protein is Electron transfer flavoprotein regulatory factor 1 of Mus musculus (Mouse).